Consider the following 491-residue polypeptide: Katanin p60 ATPase-containing subunit A1 (491 aa).

An interaction with KATNB1 region spans residues 1 to 29 (MSLLMISENVKLAREYALLGNYDSAMVYY). An interaction with dynein and NDEL1 region spans residues 1 to 75 (MSLLMISENV…VKDIMKTLES (75 aa)). The interaction with microtubules stretch occupies residues 1-185 (MSLLMISENV…EPETNKFDST (185 aa)). Residues S42 and S109 each carry the phosphoserine; by DYRK2 modification. Residues 87 to 185 (QHDLPASEGE…EPETNKFDST (99 aa)) form a disordered region. A compositionally biased stretch (polar residues) spans 117–144 (SSQYSDPKSHGNRPSTTVRVHRSSAQNV). At T133 the chain carries Phosphothreonine; by DYRK2. The span at 145 to 169 (HNDRGKAVRCREKKEQNKGREEKNK) shows a compositional bias: basic and acidic residues. S170 is subject to Phosphoserine. 249–256 (GPPGTGKT) is a binding site for ATP.

The protein belongs to the AAA ATPase family. Katanin p60 subunit A1 subfamily. As to quaternary structure, can homooligomerize into hexameric rings, which may be promoted by interaction with microtubules. Interacts with KATNB1, which may serve as a targeting subunit. Interacts with ASPM; the katanin complex formation KATNA1:KATNB1 is required for the association of ASPM. Interacts with dynein and NDEL1. Associates with the E3 ligase complex containing DYRK2, EDD/UBR5, DDB1 and DCAF1 proteins (EDVP complex). Interacts with KLHL42 (via the kelch domains). Interacts with CUL3; the interaction is enhanced by KLHL42. Interacts with KATNB1 and KATNBL1. Interacts with CAMSAP2 and CAMSAP3; leading to regulate the length of CAMSAP-decorated microtubule stretches. Post-translationally, phosphorylation by DYRK2 triggers ubiquitination and subsequent degradation. In terms of processing, ubiquitinated by the BCR(KLHL42) E3 ubiquitin ligase complex, leading to its proteasomal degradation. Ubiquitinated by the EDVP E3 ligase complex and subsequently targeted for proteasomal degradation.

It localises to the cytoplasm. Its subcellular location is the midbody. The protein localises to the cytoskeleton. It is found in the microtubule organizing center. The protein resides in the centrosome. It localises to the spindle pole. Its subcellular location is the spindle. It carries out the reaction n ATP + n H2O + a microtubule = n ADP + n phosphate + (n+1) alpha/beta tubulin heterodimers.. With respect to regulation, ATPase activity is stimulated by microtubules, which promote homooligomerization. ATP-dependent microtubule severing is stimulated by interaction with KATNB1. Its function is as follows. Catalytic subunit of a complex which severs microtubules in an ATP-dependent manner. Microtubule severing may promote rapid reorganization of cellular microtubule arrays and the release of microtubules from the centrosome following nucleation. Microtubule release from the mitotic spindle poles may allow depolymerization of the microtubule end proximal to the spindle pole, leading to poleward microtubule flux and poleward motion of chromosome. Microtubule release within the cell body of neurons may be required for their transport into neuronal processes by microtubule-dependent motor proteins. This transport is required for axonal growth. The chain is Katanin p60 ATPase-containing subunit A1 from Homo sapiens (Human).